Here is a 510-residue protein sequence, read N- to C-terminus: 2,3-bisphosphoglycerate-independent phosphoglycerate mutase (510 aa).

The Mn(2+) site is built by D14 and S64. S64 (phosphoserine intermediate) is an active-site residue. Substrate-binding positions include H125, 155–156 (RD), R187, R193, 259–262 (RADR), and K332. Positions 399, 403, 440, 441, and 459 each coordinate Mn(2+).

This sequence belongs to the BPG-independent phosphoglycerate mutase family. In terms of assembly, monomer. Requires Mn(2+) as cofactor.

It catalyses the reaction (2R)-2-phosphoglycerate = (2R)-3-phosphoglycerate. It participates in carbohydrate degradation; glycolysis; pyruvate from D-glyceraldehyde 3-phosphate: step 3/5. Its function is as follows. Catalyzes the interconversion of 2-phosphoglycerate and 3-phosphoglycerate. Essential for the growth and pathogenicity on the host plant. In Pseudomonas syringae pv. tomato (strain ATCC BAA-871 / DC3000), this protein is 2,3-bisphosphoglycerate-independent phosphoglycerate mutase.